The primary structure comprises 599 residues: Translation initiation factor IF-2 (599 aa).

The tr-type G domain maps to 111–278; sequence PRPPIITVMG…SILLLAEILE (168 aa). A G1 region spans residues 120-127; it reads GHVDHGKT. GTP is bound at residue 120-127; it reads GHVDHGKT. The segment at 145–149 is G2; the sequence is GITQH. Residues 166–169 are G3; that stretch reads DTPG. GTP is bound by residues 166-170 and 220-223; these read DTPGH and NKMD. The G4 stretch occupies residues 220-223; that stretch reads NKMD. A G5 region spans residues 256–258; sequence SAL.

Belongs to the TRAFAC class translation factor GTPase superfamily. Classic translation factor GTPase family. IF-2 subfamily.

It is found in the cytoplasm. One of the essential components for the initiation of protein synthesis. Protects formylmethionyl-tRNA from spontaneous hydrolysis and promotes its binding to the 30S ribosomal subunits. Also involved in the hydrolysis of GTP during the formation of the 70S ribosomal complex. The sequence is that of Translation initiation factor IF-2 from Mesomycoplasma hyopneumoniae (strain 7448) (Mycoplasma hyopneumoniae).